A 55-amino-acid polypeptide reads, in one-letter code: Large ribosomal subunit protein bL33 (55 aa).

This sequence belongs to the bacterial ribosomal protein bL33 family.

In Buchnera aphidicola subsp. Acyrthosiphon pisum (strain 5A), this protein is Large ribosomal subunit protein bL33.